Here is a 511-residue protein sequence, read N- to C-terminus: Maturase K (511 aa).

Belongs to the intron maturase 2 family. MatK subfamily.

The protein localises to the plastid. It is found in the chloroplast. Usually encoded in the trnK tRNA gene intron. Probably assists in splicing its own and other chloroplast group II introns. The chain is Maturase K from Avena sativa (Oat).